The primary structure comprises 421 residues: Glucose-1-phosphate adenylyltransferase (421 aa).

Alpha-D-glucose 1-phosphate contacts are provided by residues Tyr109, Gly175, 190–191, and Ser208; that span reads EK.

It belongs to the bacterial/plant glucose-1-phosphate adenylyltransferase family. In terms of assembly, homotetramer.

The catalysed reaction is alpha-D-glucose 1-phosphate + ATP + H(+) = ADP-alpha-D-glucose + diphosphate. The protein operates within glycan biosynthesis; glycogen biosynthesis. Its function is as follows. Involved in the biosynthesis of ADP-glucose, a building block required for the elongation reactions to produce glycogen. Catalyzes the reaction between ATP and alpha-D-glucose 1-phosphate (G1P) to produce pyrophosphate and ADP-Glc. The chain is Glucose-1-phosphate adenylyltransferase from Teredinibacter turnerae (strain ATCC 39867 / T7901).